We begin with the raw amino-acid sequence, 319 residues long: uncharacterized protein (319 aa).

A signal peptide spans 1 to 23 (MFPFRRNVLAFAALLALSSPVLA).

It to H.influenzae HI_0755.

This is an uncharacterized protein from Escherichia coli (strain K12).